We begin with the raw amino-acid sequence, 106 residues long: Nucleoid-associated protein XAC1110 (106 aa).

Residues 80–89 show a composition bias toward basic and acidic residues; sequence KIDAESKDRM. Residues 80–106 are disordered; the sequence is KIDAESKDRMGSATAGMQLPPGMKLPF.

This sequence belongs to the YbaB/EbfC family. As to quaternary structure, homodimer.

It localises to the cytoplasm. It is found in the nucleoid. Functionally, binds to DNA and alters its conformation. May be involved in regulation of gene expression, nucleoid organization and DNA protection. The chain is Nucleoid-associated protein XAC1110 from Xanthomonas axonopodis pv. citri (strain 306).